Consider the following 391-residue polypeptide: tRNA-specific 2-thiouridylase MnmA (391 aa).

Residues 20 to 27 (AMSGGVDS) and L46 each bind ATP. C114 functions as the Nucleophile in the catalytic mechanism. C114 and C210 are oxidised to a cystine. G138 serves as a coordination point for ATP. Residues 160 to 162 (RDQ) are interaction with tRNA. C210 acts as the Cysteine persulfide intermediate in catalysis.

The protein belongs to the MnmA/TRMU family.

It is found in the cytoplasm. It catalyses the reaction S-sulfanyl-L-cysteinyl-[protein] + uridine(34) in tRNA + AH2 + ATP = 2-thiouridine(34) in tRNA + L-cysteinyl-[protein] + A + AMP + diphosphate + H(+). Functionally, catalyzes the 2-thiolation of uridine at the wobble position (U34) of tRNA, leading to the formation of s(2)U34. The protein is tRNA-specific 2-thiouridylase MnmA of Bartonella bacilliformis (strain ATCC 35685 / KC583 / Herrer 020/F12,63).